A 750-amino-acid chain; its full sequence is MKEKIKLSLLILTSIILAVANSQTQPKTLAMTATVYDQHTFYNDNFENQGPAYLTKNMVVSKLDKTLKIPQLVSLDINVEGKTGVNYFGTMYNPKLFKYFFSENTNASPDDKNSGKNFPLLMDLILTLNETSGAYEFSKQEYFPINGKGFNDPSYKVPPKYKADSPNVDWFKMAGGGYSQNNYNYCIKLNSKFTYFNKGEVFNFRGDDDVWVFIDNRLVVDLGGLHTAETANIKLKDITNPPLQTNKIYDLDFFYCERRATGSSIQLSTTLEIFCVDDYCGVCNGDGTSCCTSSTCEDNNACTIDKCPKLGSVAPGKFTKDDCVYSEVVCPIESNQCLRPYCDPKEGCKTSPVECVNGNIDKCFEQFGSCDSSLGCQYNYKCNAYGKCNLGCSGGQCKVKTSEQCSEEFGNDPCYTYSCDVELGCVRTEKCSQEDAKLCTINTCLKNVTREDDRCELVSIQEECNCCAGHTVDPCQLPGCGEPGECKPVDKIIDDNNLCTIDKCENGTITHTPVKCGGCSICDSKTGQCVINPPICDDDNVCTIDTCSLVENPNGSIDGVCSNKIFDCASNDTDLCNIWTCDANNGGCQSIKKVCDDPSPCLVSKCEPSTGQCVDSPRTCDHGGAFCLISECDERLGCIVYNRQCASDNRKCQAGVCVNGTSSEEGHCTSVDYDPLPFGCNTAAVVSTAVIAGVTVAAVVGLGIFLYGGKKGYDYYQDNKSKGMTGANSNPLYKESGNAGQNPLYNDNNL.

An N-terminal signal peptide occupies residues 1–22 (MKEKIKLSLLILTSIILAVANS). Topologically, residues 23–688 (QTQPKTLAMT…GCNTAAVVST (666 aa)) are extracellular. Asn-129 is a glycosylation site (N-linked (GlcNAc...) asparagine). The PA14 domain occupies 140 to 286 (QEYFPINGKG…DDYCGVCNGD (147 aa)). Residues Asn-447, Asn-506, Asn-554, Asn-571, and Asn-659 are each glycosylated (N-linked (GlcNAc...) asparagine). A helical membrane pass occupies residues 689-709 (AVIAGVTVAAVVGLGIFLYGG). Residues 710–750 (KKGYDYYQDNKSKGMTGANSNPLYKESGNAGQNPLYNDNNL) are Cytoplasmic-facing. Residues 727–750 (ANSNPLYKESGNAGQNPLYNDNNL) are disordered. A compositionally biased stretch (polar residues) spans 738-750 (NAGQNPLYNDNNL).

Belongs to the prespore-cell-inducing factor family.

Its subcellular location is the membrane. This is Protein psiO (psiO) from Dictyostelium discoideum (Social amoeba).